Here is a 75-residue protein sequence, read N- to C-terminus: Venom serine protease inhibitor BiVSPI (75 aa).

An N-terminal signal peptide occupies residues 1–20; it reads MSRILFVFLAVMAIFSTSFG. Cystine bridges form between Cys23–Cys55, Cys32–Cys51, Cys35–Cys47, Cys39–Cys75, and Cys57–Cys69. A TIL domain is found at 23–75; sequence CGLNEEFKSCGSCEPTCAKPRVTICTMECKIGCQCKSGYLRNGEGTCVLPEKC.

It belongs to the serine protease inhibitor-like (TIL domain-containing) family. May be O-glycosylated. Expressed by the venom gland (at protein level) and expressed in fat body.

It localises to the secreted. It is found in the target cell membrane. Antimicrobial venom serine protease inhibitor. Exhibits inhibitory activity against chymotrypsin (IC(50)=19.56 nM, Ki=15.24 nM) and microbial serine proteases, such as subtilisin A (IC(50)=6.57 nM, Ki=6.83 nM) and proteinase K (IC(50)=7.11 nM, Ki=7.02 nM). Has not activity against trypsin, plasmin, tPA, thrombin, factor Xa or elastase. Binds and inhibits Gram-positive bacteria (B.subtilis (MIC=29.45 uM), B.thuringiensis (MIC=91.03 uM)) and the entomopathogenic fungus B.bassiana (MIC=30.09 uM) but not to E.coli. In Bombus ignitus (Bumblebee), this protein is Venom serine protease inhibitor BiVSPI.